A 910-amino-acid polypeptide reads, in one-letter code: Leucine--tRNA ligase (910 aa).

The 'HIGH' region motif lies at 50–60; the sequence is PYTNGSLHVGH. A 'KMSKS' region motif is present at residues 611–615; sequence KISKS. Lys-614 is an ATP binding site.

The protein belongs to the class-I aminoacyl-tRNA synthetase family.

It localises to the cytoplasm. The catalysed reaction is tRNA(Leu) + L-leucine + ATP = L-leucyl-tRNA(Leu) + AMP + diphosphate. The sequence is that of Leucine--tRNA ligase from Thermoplasma acidophilum (strain ATCC 25905 / DSM 1728 / JCM 9062 / NBRC 15155 / AMRC-C165).